A 299-amino-acid chain; its full sequence is Oxygen-dependent coproporphyrinogen-III oxidase (299 aa).

Residue S92 coordinates substrate. Residues H96 and H106 each contribute to the a divalent metal cation site. The Proton donor role is filled by H106. 108-110 (NVR) is a binding site for substrate. Positions 145 and 175 each coordinate a divalent metal cation. The segment at 240 to 275 (YVEFNLVWDRGTLFGLQTGGRTESILMSMPPLVRWE) is important for dimerization. Residue 258 to 260 (GGR) coordinates substrate.

It belongs to the aerobic coproporphyrinogen-III oxidase family. Homodimer. It depends on a divalent metal cation as a cofactor.

The protein localises to the cytoplasm. The catalysed reaction is coproporphyrinogen III + O2 + 2 H(+) = protoporphyrinogen IX + 2 CO2 + 2 H2O. Its pathway is porphyrin-containing compound metabolism; protoporphyrin-IX biosynthesis; protoporphyrinogen-IX from coproporphyrinogen-III (O2 route): step 1/1. In terms of biological role, involved in the heme biosynthesis. Catalyzes the aerobic oxidative decarboxylation of propionate groups of rings A and B of coproporphyrinogen-III to yield the vinyl groups in protoporphyrinogen-IX. This chain is Oxygen-dependent coproporphyrinogen-III oxidase, found in Salmonella typhi.